The chain runs to 154 residues: Lipoprotein signal peptidase (154 aa).

Helical transmembrane passes span 4–24 (IIIPIITILLIALDQLSKLWI), 62–82 (LFTLITIFVVCVAIIYLMKHI), and 84–104 (GSYWLLISLTLIISGGLGNFI). Catalysis depends on residues Asp-114 and Asp-130. Residues 125–145 (IFNVADSYLTIGIICLMIALW) traverse the membrane as a helical segment.

The protein belongs to the peptidase A8 family.

It is found in the cell membrane. The catalysed reaction is Release of signal peptides from bacterial membrane prolipoproteins. Hydrolyzes -Xaa-Yaa-Zaa-|-(S,diacylglyceryl)Cys-, in which Xaa is hydrophobic (preferably Leu), and Yaa (Ala or Ser) and Zaa (Gly or Ala) have small, neutral side chains.. It participates in protein modification; lipoprotein biosynthesis (signal peptide cleavage). In terms of biological role, this protein specifically catalyzes the removal of signal peptides from prolipoproteins. The polypeptide is Lipoprotein signal peptidase (Streptococcus agalactiae serotype Ia (strain ATCC 27591 / A909 / CDC SS700)).